We begin with the raw amino-acid sequence, 425 residues long: Orexin/Hypocretin receptor type 1 (425 aa).

The interval 1–24 (MEPSATPGAQMGVPPGSREPSPVP) is disordered. Residues 1–46 (MEPSATPGAQMGVPPGSREPSPVPPDYEDEFLRYLWRDYLYPKQYE) are Extracellular-facing. Residues 26-41 (DYEDEFLRYLWRDYLY) are required for response to orexin-A. A helical transmembrane segment spans residues 47 to 67 (WVLIAAYVAVFVVALVGNTLV). At 68-82 (CLAVWRNHHMRTVTN) the chain is on the cytoplasmic side. The chain crosses the membrane as a helical span at residues 83 to 105 (YFIVNLSLADVLVTAICLPASLL). At 106–119 (VDITESWLFGHALC) the chain is on the extracellular side. Cysteine 119 and cysteine 202 form a disulfide bridge. The chain crosses the membrane as a helical span at residues 120-140 (KVIPYLQAVSVSVAVLTLSFI). Over 141–160 (ALDRWYAICHPLLFKSTARR) the chain is Cytoplasmic. A helical membrane pass occupies residues 161–182 (ARGSILGIWAVSLAIMVPQAAV). Over 183 to 213 (MECSSVLPELANRTRLFSVCDERWADDLYPK) the chain is Extracellular. Asparagine 194 is a glycosylation site (N-linked (GlcNAc...) asparagine). The helical transmembrane segment at 214 to 235 (IYHSCFFIVTYLAPLGLMAMAY) threads the bilayer. Over 236–298 (FQIFRKLWGR…QMRARRKTAK (63 aa)) the chain is Cytoplasmic. The helical transmembrane segment at 299–321 (MLMVVLLVFALCYLPISVLNVLK) threads the bilayer. A suvorexant-binding site is contributed by asparagine 318. At 322-336 (RVFGMFRQASDREAV) the chain is on the extracellular side. The helical transmembrane segment at 337–360 (YACFTFSHWLVYANSAANPIIYNF) threads the bilayer. The Cytoplasmic portion of the chain corresponds to 361 to 425 (LSGKFREQFK…VLTSVTTVLP (65 aa)).

The protein belongs to the G-protein coupled receptor 1 family.

It is found in the cell membrane. Functionally, moderately selective excitatory receptor for orexin-A and, with a lower affinity, for orexin-B neuropeptide. Triggers an increase in cytoplasmic Ca(2+) levels in response to orexin-A binding. The sequence is that of Orexin/Hypocretin receptor type 1 from Homo sapiens (Human).